We begin with the raw amino-acid sequence, 206 residues long: Uridine kinase (206 aa).

11-18 is a binding site for ATP; sequence GGTGSGKS.

The protein belongs to the uridine kinase family.

Its subcellular location is the cytoplasm. It carries out the reaction uridine + ATP = UMP + ADP + H(+). The catalysed reaction is cytidine + ATP = CMP + ADP + H(+). Its pathway is pyrimidine metabolism; CTP biosynthesis via salvage pathway; CTP from cytidine: step 1/3. The protein operates within pyrimidine metabolism; UMP biosynthesis via salvage pathway; UMP from uridine: step 1/1. The sequence is that of Uridine kinase from Clostridium botulinum (strain 657 / Type Ba4).